A 100-amino-acid polypeptide reads, in one-letter code: Protein MEN-8 (100 aa).

The first 33 residues, 1-33, serve as a signal peptide directing secretion; sequence MANNMKSATFCKATWAIFLVALAILVQLKGSEA. 4 disulfides stabilise this stretch: cysteine 38/cysteine 76, cysteine 48/cysteine 65, cysteine 66/cysteine 91, and cysteine 78/cysteine 98.

This sequence belongs to the A9/FIL1 family.

The protein resides in the secreted. In Silene latifolia (White campion), this protein is Protein MEN-8 (MEN-8).